We begin with the raw amino-acid sequence, 77 residues long: Probable Fe(2+)-trafficking protein (77 aa).

This sequence belongs to the Fe(2+)-trafficking protein family.

Its function is as follows. Could be a mediator in iron transactions between iron acquisition and iron-requiring processes, such as synthesis and/or repair of Fe-S clusters in biosynthetic enzymes. In Baumannia cicadellinicola subsp. Homalodisca coagulata, this protein is Probable Fe(2+)-trafficking protein.